A 239-amino-acid polypeptide reads, in one-letter code: Serine protease SplD (239 aa).

The signal sequence occupies residues Met1–Ala36. Active-site charge relay system residues include His75, Asp114, and Ser192.

This sequence belongs to the peptidase S1B family.

The protein localises to the secreted. This Staphylococcus aureus (strain Mu3 / ATCC 700698) protein is Serine protease SplD (splD).